We begin with the raw amino-acid sequence, 208 residues long: Small ribosomal subunit protein uS4 (208 aa).

The S4 RNA-binding domain maps to 98–158 (RRLDNIVYRL…EKSRKVASIN (61 aa)).

It belongs to the universal ribosomal protein uS4 family. Part of the 30S ribosomal subunit. Contacts protein S5. The interaction surface between S4 and S5 is involved in control of translational fidelity.

In terms of biological role, one of the primary rRNA binding proteins, it binds directly to 16S rRNA where it nucleates assembly of the body of the 30S subunit. Its function is as follows. With S5 and S12 plays an important role in translational accuracy. This chain is Small ribosomal subunit protein uS4, found in Geotalea daltonii (strain DSM 22248 / JCM 15807 / FRC-32) (Geobacter daltonii).